A 191-amino-acid polypeptide reads, in one-letter code: UPF0149 protein plu3602 (191 aa).

Belongs to the UPF0149 family.

The chain is UPF0149 protein plu3602 from Photorhabdus laumondii subsp. laumondii (strain DSM 15139 / CIP 105565 / TT01) (Photorhabdus luminescens subsp. laumondii).